We begin with the raw amino-acid sequence, 121 residues long: Large ribosomal subunit protein bL19 (121 aa).

This sequence belongs to the bacterial ribosomal protein bL19 family.

Its function is as follows. This protein is located at the 30S-50S ribosomal subunit interface and may play a role in the structure and function of the aminoacyl-tRNA binding site. In Acidothermus cellulolyticus (strain ATCC 43068 / DSM 8971 / 11B), this protein is Large ribosomal subunit protein bL19.